A 572-amino-acid chain; its full sequence is MPRGVAVRVTTMDAELEFAIQPNTTGKQLFDQVVKTIGLREIWFFGLQYIDSKGLVTWLKLNKKVVAQDLRKDNPLQFKFRVKFYPEEVTEELIQEITQRLFFLQIKEGILSDEVYCPPETSVLLASYAAQAKYGPHSASTKARLTEDTNILPKRVIEQHKMTKEQWYERVSNWHQEHLSLSKEDAITEYMKIAQDLEMYGVNYFEIRNKKGTDLWLGVDALGLNVYEKDDKLTPKIGFPWSEIRNISFNDKKFVIKPIEKKAPDFVFYASRLRINKRILALCMGNHELYMRRRKPDTIEVQQMKAQAKEEKQAKKLEREQLAIEMKKRQETEEKYKRLQQQIREKELAEEKNREDLKRWEEESRAMQEKLKQQQMESEEYQSKVAAMEMQMNEATLEREMTAQEKEEMRARVEALAEEKARLEQSREESLKESAEFAEKLRLSQERERELQEAQEAAAAQHAAQLAAQREAQQLIPKDEGEEDEQDHELEVQQDDNDDLDDKESYLPDKHLLDKLQKLQSELQAMKDESKGEDRYDKIHQENIRAGRDKYQTLRNIRSGNTRQRIDTFENI.

An FERM domain is found at 1–294 (MPRGVAVRVT…GNHELYMRRR (294 aa)). 2 disordered regions span residues 444–508 (SQER…SYLP) and 523–544 (LQAM…QENI). A compositionally biased stretch (low complexity) spans 454-475 (AQEAAAAQHAAQLAAQREAQQL). Positions 480–502 (EGEEDEQDHELEVQQDDNDDLDD) are enriched in acidic residues. Basic and acidic residues predominate over residues 525-544 (AMKDESKGEDRYDKIHQENI).

Its subcellular location is the cell membrane. The protein localises to the cytoplasm. The protein resides in the cytoskeleton. It localises to the cell projection. Its function is as follows. Probably involved in connections of major cytoskeletal structures to the plasma membrane. This chain is Moesin, found in Lytechinus variegatus (Green sea urchin).